A 330-amino-acid chain; its full sequence is D-cysteine desulfhydrase (330 aa).

Residue lysine 52 is modified to N6-(pyridoxal phosphate)lysine.

This sequence belongs to the ACC deaminase/D-cysteine desulfhydrase family. Homodimer. The cofactor is pyridoxal 5'-phosphate.

It catalyses the reaction D-cysteine + H2O = hydrogen sulfide + pyruvate + NH4(+) + H(+). In terms of biological role, catalyzes the alpha,beta-elimination reaction of D-cysteine and of several D-cysteine derivatives. It could be a defense mechanism against D-cysteine. This chain is D-cysteine desulfhydrase, found in Yersinia pestis.